Reading from the N-terminus, the 982-residue chain is Little elongation complex subunit 2 (982 aa).

Phosphoserine occurs at positions 17 and 326. The segment covering 410 to 427 (TTKVSKSPSPASTSTVPN) has biased composition (polar residues). 2 disordered regions span residues 410 to 450 (TTKV…PDIS) and 473 to 504 (GMDGGPEECKNKDDQGFESCEKVSNSDKPLIQ). Residues 479–497 (EECKNKDDQGFESCEKVSN) are compositionally biased toward basic and acidic residues. Phosphoserine is present on serine 571. Position 573 is a phosphothreonine (threonine 573). Disordered stretches follow at residues 595–623 (VGSNLSSRPASPNSSSGQASVGNQTNTAC), 672–697 (ENSKQPSVSEQLSGPSDSSSWPKSGW), and 930–982 (PKSL…RKIT). The span at 597-610 (SNLSSRPASPNSSS) shows a compositional bias: low complexity. 2 stretches are compositionally biased toward polar residues: residues 611–623 (GQASVGNQTNTAC) and 672–683 (ENSKQPSVSEQL). The span at 684–697 (SGPSDSSSWPKSGW) shows a compositional bias: low complexity. Positions 956–970 (SMETKSSCLPAQQVE) are enriched in polar residues.

It belongs to the ICE2 family. In terms of assembly, component of the little elongation complex (LEC), at least composed of ELL (ELL, ELL2 or ELL3), ZC3H8, ICE1 and ICE2. Interacts with ICE1 (via C-terminus domain). Interacts with ELL. In terms of tissue distribution, expressed at low levels in lung and testis.

It localises to the nucleus. Functionally, component of the little elongation complex (LEC), a complex required to regulate small nuclear RNA (snRNA) gene transcription by RNA polymerase II and III. This Homo sapiens (Human) protein is Little elongation complex subunit 2 (ICE2).